Reading from the N-terminus, the 506-residue chain is Gamma-aminobutyric acid receptor subunit epsilon (506 aa).

An N-terminal signal peptide occupies residues 1-17 (MLPKVLLMLLNMFLALQ). Residues 18-277 (WRVGPHIKLE…MTFFFNVSRR (260 aa)) are Extracellular-facing. Residues 32-65 (AQDKVVFGPQPQPSGKKLPARETELTADHTTERP) form a disordered region. Positions 50 to 65 (PARETELTADHTTERP) are enriched in basic and acidic residues. An N-linked (GlcNAc...) asparagine glycan is attached at Asn-135. Cys-196 and Cys-210 are disulfide-bonded. A glycan (N-linked (GlcNAc...) asparagine) is linked at Asn-253. Residues 278-298 (FGFIVFQNYIPSSVTTMLSWV) form a helical membrane-spanning segment. The Cytoplasmic portion of the chain corresponds to 299–308 (SFWIKIEAAA). Residues 309-328 (ARASVGVSSVLTMATLGTFS) form a helical membrane-spanning segment. Topologically, residues 329–344 (RKNFPRVSYLTALDFY) are extracellular. The chain crosses the membrane as a helical span at residues 345 to 365 (IAICFVLCFCTLLEFTVLNFL). Residues 366–485 (TYNNIERQAS…HVYRLDNYSR (120 aa)) are Cytoplasmic-facing. The chain crosses the membrane as a helical span at residues 486–506 (VLFPITFFFFNVVYWVICLNL).

Belongs to the ligand-gated ion channel (TC 1.A.9) family. Gamma-aminobutyric acid receptor (TC 1.A.9.5) subfamily. GABRE sub-subfamily. As to quaternary structure, heteropentamer, formed by a combination of alpha (GABRA1-6), beta (GABRB1-3), gamma (GABRG1-3), delta (GABRD), epsilon (GABRE), rho (GABRR1-3), pi (GABRP) and theta (GABRQ) chains, each subunit exhibiting distinct physiological and pharmacological properties. Expressed in brain and heart. Strongly expressed in locus ceruleus from the first postnatal day. Weakly expressed in other brainstem nuclei and in the hypothalamus. Found in the cerebral cortex of pups.

It is found in the cell membrane. It localises to the postsynaptic cell membrane. It carries out the reaction chloride(in) = chloride(out). In terms of biological role, epsilon subunit of the heteropentameric ligand-gated chloride channel gated by gamma-aminobutyric acid (GABA), a major inhibitory neurotransmitter in the brain. GABA-gated chloride channels, also named GABA(A) receptors (GABAAR), consist of five subunits arranged around a central pore and contain GABA active binding site(s) located at the alpha and beta subunit interfaces. When activated by GABA, GABAARs selectively allow the flow of chloride anions across the cell membrane down their electrochemical gradient. GABARs containing epsilon subunit may also permit spontaneous chloride channel activity while preserving the structural information required for GABA-gated openings. GABARs containing epsilon subunit may regulate cardiac function. The chain is Gamma-aminobutyric acid receptor subunit epsilon from Rattus norvegicus (Rat).